The sequence spans 656 residues: Heat shock 70 kDa protein, mitochondrial (656 aa).

The transit peptide at 1-23 directs the protein to the mitochondrion; sequence MFARRLRGAGSLAAASLARWQSS. Positions 624–656 are disordered; the sequence is EYQQAAAGNSSSSSGNTDSSQGEQQQQGDQQKQ. Over residues 626–656 the composition is skewed to low complexity; it reads QQAAAGNSSSSSGNTDSSQGEQQQQGDQQKQ.

The protein belongs to the heat shock protein 70 family.

The protein localises to the mitochondrion matrix. Its subcellular location is the kinetoplast. Functionally, may participate in eukaryotic mitochondrial DNA replication. The chain is Heat shock 70 kDa protein, mitochondrial (MTP70) from Trypanosoma cruzi.